We begin with the raw amino-acid sequence, 497 residues long: Galactose/methyl galactoside import ATP-binding protein MglA 1 (497 aa).

2 ABC transporter domains span residues 6–243 and 256–494; these read LEMR…VGRD and GKVR…VMSM. 38-45 lines the ATP pocket; it reads GENGAGKS.

This sequence belongs to the ABC transporter superfamily. Galactose/methyl galactoside importer (TC 3.A.1.2.3) family. In terms of assembly, the complex is composed of one ATP-binding protein (MglA), two transmembrane proteins (MglC) and a solute-binding protein (MglB).

It localises to the cell inner membrane. The catalysed reaction is D-galactose(out) + ATP + H2O = D-galactose(in) + ADP + phosphate + H(+). The enzyme catalyses methyl beta-D-galactoside(out) + ATP + H2O = methyl beta-D-galactoside(in) + ADP + phosphate + H(+). Functionally, part of the ABC transporter complex MglABC involved in galactose/methyl galactoside import. Responsible for energy coupling to the transport system. This Photobacterium profundum (strain SS9) protein is Galactose/methyl galactoside import ATP-binding protein MglA 1.